A 138-amino-acid chain; its full sequence is Large ribosomal subunit protein uL16 (138 aa).

Residues 1–13 (MLQPARRKYRKEQ) are compositionally biased toward basic residues. The tract at residues 1 to 22 (MLQPARRKYRKEQKGRNTGVAT) is disordered.

The protein belongs to the universal ribosomal protein uL16 family. In terms of assembly, part of the 50S ribosomal subunit.

Functionally, binds 23S rRNA and is also seen to make contacts with the A and possibly P site tRNAs. The chain is Large ribosomal subunit protein uL16 from Polaromonas sp. (strain JS666 / ATCC BAA-500).